Here is a 444-residue protein sequence, read N- to C-terminus: Tubulin beta-7 chain (444 aa).

GTP-binding residues include Gln-11, Glu-69, Ser-138, Gly-142, Thr-143, Gly-144, Asn-204, and Asn-226. Position 69 (Glu-69) interacts with Mg(2+).

Belongs to the tubulin family. As to quaternary structure, dimer of alpha and beta chains. A typical microtubule is a hollow water-filled tube with an outer diameter of 25 nm and an inner diameter of 15 nM. Alpha-beta heterodimers associate head-to-tail to form protofilaments running lengthwise along the microtubule wall with the beta-tubulin subunit facing the microtubule plus end conferring a structural polarity. Microtubules usually have 13 protofilaments but different protofilament numbers can be found in some organisms and specialized cells. Requires Mg(2+) as cofactor. Expressed in roots, leaf sheaths, and suspension cultured cells.

It localises to the cytoplasm. Its subcellular location is the cytoskeleton. Its function is as follows. Tubulin is the major constituent of microtubules, a cylinder consisting of laterally associated linear protofilaments composed of alpha- and beta-tubulin heterodimers. Microtubules grow by the addition of GTP-tubulin dimers to the microtubule end, where a stabilizing cap forms. Below the cap, tubulin dimers are in GDP-bound state, owing to GTPase activity of alpha-tubulin. The protein is Tubulin beta-7 chain (TUBB7) of Oryza sativa subsp. japonica (Rice).